A 215-amino-acid chain; its full sequence is Uracil phosphoribosyltransferase (215 aa).

5-phospho-alpha-D-ribose 1-diphosphate is bound by residues arginine 84, arginine 109, and 136-144 (DPMLATGNT). Uracil-binding positions include isoleucine 198 and 203-205 (GDA). Aspartate 204 lines the 5-phospho-alpha-D-ribose 1-diphosphate pocket.

It belongs to the UPRTase family. The cofactor is Mg(2+).

It catalyses the reaction UMP + diphosphate = 5-phospho-alpha-D-ribose 1-diphosphate + uracil. It participates in pyrimidine metabolism; UMP biosynthesis via salvage pathway; UMP from uracil: step 1/1. With respect to regulation, allosterically activated by GTP. Functionally, catalyzes the conversion of uracil and 5-phospho-alpha-D-ribose 1-diphosphate (PRPP) to UMP and diphosphate. This Methanothermobacter thermautotrophicus (strain ATCC 29096 / DSM 1053 / JCM 10044 / NBRC 100330 / Delta H) (Methanobacterium thermoautotrophicum) protein is Uracil phosphoribosyltransferase.